Reading from the N-terminus, the 456-residue chain is Bifunctional protein GlmU (456 aa).

The interval M1 to R229 is pyrophosphorylase. Residues L11–G14, K25, Q76, G81–T82, Y103–D105, G140, E154, N169, and N227 contribute to the UDP-N-acetyl-alpha-D-glucosamine site. D105 lines the Mg(2+) pocket. N227 contributes to the Mg(2+) binding site. The interval L230–A250 is linker. The N-acetyltransferase stretch occupies residues G251–K456. Positions 333 and 351 each coordinate UDP-N-acetyl-alpha-D-glucosamine. The Proton acceptor role is filled by H363. UDP-N-acetyl-alpha-D-glucosamine is bound by residues Y366 and N377. Acetyl-CoA-binding positions include A380, N386–Y387, S405, A423, and R440.

In the N-terminal section; belongs to the N-acetylglucosamine-1-phosphate uridyltransferase family. It in the C-terminal section; belongs to the transferase hexapeptide repeat family. Homotrimer. Mg(2+) serves as cofactor.

The protein resides in the cytoplasm. It carries out the reaction alpha-D-glucosamine 1-phosphate + acetyl-CoA = N-acetyl-alpha-D-glucosamine 1-phosphate + CoA + H(+). The catalysed reaction is N-acetyl-alpha-D-glucosamine 1-phosphate + UTP + H(+) = UDP-N-acetyl-alpha-D-glucosamine + diphosphate. The protein operates within nucleotide-sugar biosynthesis; UDP-N-acetyl-alpha-D-glucosamine biosynthesis; N-acetyl-alpha-D-glucosamine 1-phosphate from alpha-D-glucosamine 6-phosphate (route II): step 2/2. Its pathway is nucleotide-sugar biosynthesis; UDP-N-acetyl-alpha-D-glucosamine biosynthesis; UDP-N-acetyl-alpha-D-glucosamine from N-acetyl-alpha-D-glucosamine 1-phosphate: step 1/1. It participates in bacterial outer membrane biogenesis; LPS lipid A biosynthesis. Catalyzes the last two sequential reactions in the de novo biosynthetic pathway for UDP-N-acetylglucosamine (UDP-GlcNAc). The C-terminal domain catalyzes the transfer of acetyl group from acetyl coenzyme A to glucosamine-1-phosphate (GlcN-1-P) to produce N-acetylglucosamine-1-phosphate (GlcNAc-1-P), which is converted into UDP-GlcNAc by the transfer of uridine 5-monophosphate (from uridine 5-triphosphate), a reaction catalyzed by the N-terminal domain. This chain is Bifunctional protein GlmU, found in Edwardsiella ictaluri (strain 93-146).